The primary structure comprises 1364 residues: MLSFVDTRTLLLLAVTSCLATCQSLQEATARKGPSGDRGPRGERGPPGPPGRDGDDGIPGPPGPPGPPGPPGLGGNFAAQFDAKGGGPGPMGLMGPRGPPGASGAPGPQGFQGPPGEPGEPGQTGPAGARGPPGPPGKAGEDGHPGKPGRPGERGVVGPQGARGFPGTPGLPGFKGIRGHNGLDGLKGQPGAPGVKGEPGAPGENGTPGQTGARGLPGERGRVGAPGPAGARGSDGSVGPVGPAGPIGSAGPPGFPGAPGPKGELGPVGNPGPAGPAGPRGEVGLPGLSGPVGPPGNPGANGLPGAKGAAGLPGVAGAPGLPGPRGIPGPVGAAGATGARGLVGEPGPAGSKGESGNKGEPGAVGQPGPPGPSGEEGKRGSTGEIGPAGPPGPPGLRGNPGSRGLPGADGRAGVMGPAGSRGATGPAGVRGPNGDSGRPGEPGLMGPRGFPGSPGNIGPAGKEGPVGLPGIDGRPGPIGPAGARGEPGNIGFPGPKGPSGDPGKAGEKGHAGLAGARGAPGPDGNNGAQGPPGLQGVQGGKGEQGPAGPPGFQGLPGPAGTAGEAGKPGERGIPGEFGLPGPAGARGERGPPGESGAAGPTGPIGSRGPSGPPGPDGNKGEPGVVGAPGTAGPSGPSGLPGERGAAGIPGGKGEKGETGLRGDIGSPGRDGARGAPGAIGAPGPAGANGDRGEAGPAGPAGPAGPRGSPGERGEVGPAGPNGFAGPAGAAGQPGAKGERGTKGPKGENGPVGPTGPVGAAGPSGPNGPPGPAGSRGDGGPPGATGFPGAAGRTGPPGPSGISGPPGPPGPAGKEGLRGPRGDQGPVGRSGETGASGPPGFVGEKGPSGEPGTAGPPGTPGPQGLLGAPGFLGLPGSRGERGLPGVAGSVGEPGPLGIAGPPGARGPPGNVGNPGVNGAPGEAGRDGNPGNDGPPGRDGQPGHKGERGYPGNAGPVGAAGAPGPQGPVGPVGKHGNRGEPGPAGAVGPAGAVGPRGPSGPQGIRGDKGEPGDKGPRGLPGLKGHNGLQGLPGLAGHHGDQGAPGAVGPAGPRGPAGPSGPAGKDGRIGQPGAVGPAGIRGSQGSQGPAGPPGPPGPPGPPGPSGGGYEFGFDGDFYRADQPRSPTSLRPKDYEVDATLKSLNNQIETLLTPEGSRKNPARTCRDLRLSHPEWSSGYYWIDPNQGCTMDAIKVYCDFSTGETCIRAQPEDIPVKNWYRNSKAKKHVWVGETINGGTQFEYNVEGVTTKEMATQLAFMRLLANHASQNITYHCKNSIAYMDEETGNLKKAVILQGSNDVELVAEGNSRFTYTVLVDGCSKKTNEWQKTIIEYKTNKPSRLPILDIAPLDIGGADQEIRLNIGPVCFK.

The signal sequence occupies residues Met1–Cys22. Gln23 is modified (pyrrolidone carboxylic acid). The propeptide at Gln23–Ala79 is N-terminal propeptide. Residues Gln26–Pro1128 are disordered. Basic and acidic residues predominate over residues Pro34–Arg44. A compositionally biased stretch (pro residues) spans Pro59 to Pro71. Gln80 carries the post-translational modification Pyrrolidone carboxylic acid. Position 84 is an allysine (Lys84). Positions Leu93–Arg130 are enriched in low complexity. Pro100, Pro106, Pro115, Pro118, Pro121, Pro133, Pro136, Pro145, Pro151, Pro166, Pro169, and Pro172 each carry 4-hydroxyproline. Basic and acidic residues predominate over residues Ala139 to Glu153. Lys175 bears the 5-hydroxylysine; alternate mark. The O-linked (Gal...) hydroxylysine; alternate glycan is linked to Lys175. 2 positions are modified to 4-hydroxyproline: Pro190 and Pro193. A 5-hydroxylysine modification is found at Lys196. 4-hydroxyproline is present on residues Pro199, Pro202, Pro208, Pro217, Pro226, Pro253, Pro256, and Pro259. Residues Val223–Pro252 show a composition bias toward low complexity. Lys262 carries the 5-hydroxylysine modification. 4-hydroxyproline is present on residues Pro271, Pro286, Pro295, and Pro304. The segment covering Ala277–Pro291 has biased composition (low complexity). The segment covering Pro298–Pro319 has biased composition (low complexity). At Lys307 the chain carries 5-hydroxylysine. 4-hydroxyproline is present on residues Pro313, Pro319, Pro322, Pro328, and Pro346. The span at Pro328 to Val343 shows a compositional bias: low complexity. Residue Lys352 is modified to 5-hydroxylysine. 4-hydroxyproline is present on residues Pro361, Pro367, Pro370, Pro391, Pro394, Pro400, Pro406, Pro439, and Pro442. The segment covering Leu396–Pro406 has biased composition (low complexity). Composition is skewed to low complexity over residues Leu468–Pro487 and Ala511–Gln535. Gly residues predominate over residues Gly536–Gly545. Low complexity-rich tracts occupy residues Pro592–Pro609, Glu621–Arg643, Ser666–Asn688, and Val715–Ala735. Basic and acidic residues predominate over residues Lys736–Lys745. Residues Asn748–Ser763 show a composition bias toward low complexity. The segment covering Gly773–Gly782 has biased composition (gly residues). Low complexity-rich tracts occupy residues Ala783 to Thr793, Pro861 to Pro874, Glu891 to Asn930, Tyr948 to Pro961, and Glu978 to Pro999. Residues Arg1003–Pro1014 are compositionally biased toward basic and acidic residues. Positions Ala1087 to Pro1101 are enriched in pro residues. A propeptide spans Asp1118–Lys1364 (C-terminal propeptide). One can recognise a Fibrillar collagen NC1 domain in the interval Tyr1131–Lys1364. 3 disulfides stabilise this stretch: Cys1161–Cys1193, Cys1201–Cys1362, and Cys1270–Cys1315. The Ca(2+) site is built by Asp1179, Asn1181, Gln1182, Cys1184, and Asp1187. A glycan (N-linked (GlcNAc...) asparagine) is linked at Asn1265.

This sequence belongs to the fibrillar collagen family. In terms of assembly, trimers of one alpha 2(I) and two alpha 1(I) chains. Interacts (via C-terminus) with TMEM131 (via PapD-L domain); the interaction is direct and is involved in assembly and TRAPPIII ER-to-Golgi transport complex-dependent secretion of collagen. Prolines at the third position of the tripeptide repeating unit (G-X-Y) are hydroxylated in some or all of the chains. In terms of tissue distribution, forms the fibrils of tendon, ligaments and bones. In bones the fibrils are mineralized with calcium hydroxyapatite.

It localises to the secreted. The protein localises to the extracellular space. It is found in the extracellular matrix. In terms of biological role, type I collagen is a member of group I collagen (fibrillar forming collagen). This chain is Collagen alpha-2(I) chain (COL1A2), found in Bos taurus (Bovine).